Here is a 124-residue protein sequence, read N- to C-terminus: MAFKVVVSDTKTGKSYQFETESTALIGKKIGDEISGSVVELEGYKLKITGGSDKCGFAMRHDIHGAMKMRVLLKEGPGYNVKEKGLRRRKSLRGNTISKDVTLINTKVVEYGSAPLGGEPESTE.

This sequence belongs to the eukaryotic ribosomal protein eS6 family.

The sequence is that of Small ribosomal subunit protein eS6 from Methanococcus maripaludis (strain C7 / ATCC BAA-1331).